Reading from the N-terminus, the 116-residue chain is Large ribosomal subunit protein bL19 (116 aa).

This sequence belongs to the bacterial ribosomal protein bL19 family.

This protein is located at the 30S-50S ribosomal subunit interface and may play a role in the structure and function of the aminoacyl-tRNA binding site. The sequence is that of Large ribosomal subunit protein bL19 from Pseudomonas putida (strain ATCC 700007 / DSM 6899 / JCM 31910 / BCRC 17059 / LMG 24140 / F1).